The chain runs to 336 residues: Ketol-acid reductoisomerase (NADP(+)) (336 aa).

The region spanning 2–181 is the KARI N-terminal Rossmann domain; it reads AKVYYEKDVM…GATRAGVLET (180 aa). Residues 25-28, Arg-48, Ser-52, and 82-85 each bind NADP(+); these read YGSQ and DELQ. The active site involves His-107. Position 133 (Gly-133) interacts with NADP(+). The KARI C-terminal knotted domain occupies 182-327; sequence TFKEETETDL…RQLREMMPFV (146 aa). 4 residues coordinate Mg(2+): Asp-190, Glu-194, Glu-226, and Glu-230. Residue Ser-251 participates in substrate binding.

Belongs to the ketol-acid reductoisomerase family. Mg(2+) is required as a cofactor.

The enzyme catalyses (2R)-2,3-dihydroxy-3-methylbutanoate + NADP(+) = (2S)-2-acetolactate + NADPH + H(+). It catalyses the reaction (2R,3R)-2,3-dihydroxy-3-methylpentanoate + NADP(+) = (S)-2-ethyl-2-hydroxy-3-oxobutanoate + NADPH + H(+). Its pathway is amino-acid biosynthesis; L-isoleucine biosynthesis; L-isoleucine from 2-oxobutanoate: step 2/4. It participates in amino-acid biosynthesis; L-valine biosynthesis; L-valine from pyruvate: step 2/4. Functionally, involved in the biosynthesis of branched-chain amino acids (BCAA). Catalyzes an alkyl-migration followed by a ketol-acid reduction of (S)-2-acetolactate (S2AL) to yield (R)-2,3-dihydroxy-isovalerate. In the isomerase reaction, S2AL is rearranged via a Mg-dependent methyl migration to produce 3-hydroxy-3-methyl-2-ketobutyrate (HMKB). In the reductase reaction, this 2-ketoacid undergoes a metal-dependent reduction by NADPH to yield (R)-2,3-dihydroxy-isovalerate. The protein is Ketol-acid reductoisomerase (NADP(+)) of Bacillus cytotoxicus (strain DSM 22905 / CIP 110041 / 391-98 / NVH 391-98).